The sequence spans 371 residues: Germination protease (371 aa).

Positions 1 to 16 (MEKQKLDLSAYQIRTD) are excised as a propeptide.

It belongs to the peptidase A25 family. Homotetramer. Autoproteolytically processed. The inactive tetrameric zymogen termed p46 autoprocesses to a smaller form termed p41, which is active only during spore germination.

It catalyses the reaction Endopeptidase action with P4 Glu or Asp, P1 preferably Glu &gt; Asp, P1' hydrophobic and P2' Ala.. Its function is as follows. Initiates the rapid degradation of small, acid-soluble proteins during spore germination. The protein is Germination protease of Bacillus pumilus (strain SAFR-032).